The following is a 212-amino-acid chain: Pyridoxine/pyridoxamine 5'-phosphate oxidase (212 aa).

Substrate contacts are provided by residues Arg8–Tyr11 and Lys66. FMN is bound by residues Arg61–Lys66, Phe76–Thr77, Arg82, Lys83, and Gln105. Substrate-binding residues include Tyr123, Arg127, and Ser131. FMN is bound by residues Gln140–Ser141 and Trp185. Arg191–His193 is a substrate binding site. Arg195 contacts FMN.

Belongs to the pyridoxamine 5'-phosphate oxidase family. In terms of assembly, homodimer. The cofactor is FMN.

The catalysed reaction is pyridoxamine 5'-phosphate + O2 + H2O = pyridoxal 5'-phosphate + H2O2 + NH4(+). The enzyme catalyses pyridoxine 5'-phosphate + O2 = pyridoxal 5'-phosphate + H2O2. The protein operates within cofactor metabolism; pyridoxal 5'-phosphate salvage; pyridoxal 5'-phosphate from pyridoxamine 5'-phosphate: step 1/1. Its pathway is cofactor metabolism; pyridoxal 5'-phosphate salvage; pyridoxal 5'-phosphate from pyridoxine 5'-phosphate: step 1/1. Functionally, catalyzes the oxidation of either pyridoxine 5'-phosphate (PNP) or pyridoxamine 5'-phosphate (PMP) into pyridoxal 5'-phosphate (PLP). This is Pyridoxine/pyridoxamine 5'-phosphate oxidase from Shewanella baltica (strain OS223).